The sequence spans 197 residues: Protein shisa-4 (197 aa).

A signal peptide spans 1–27 (MPPAGPRGTAPLAAVVLLVLGAPLALA). Residues 28–87 (SEDCLWYLDRNGSWHPGFDCEFFTFCCGTCYQRYCCRDLTLLITERQQKHCLAFSPKTIA) lie on the Extracellular side of the membrane. A helical transmembrane segment spans residues 88–108 (GIASAVILFVAVVATTICCFL). At 109–197 (CSCCYLYRRR…MPPQPSYPGA (89 aa)) the chain is on the cytoplasmic side.

It belongs to the shisa family.

It localises to the membrane. This Mus musculus (Mouse) protein is Protein shisa-4 (Shisa4).